The following is a 267-amino-acid chain: Very long chain fatty acid elongase 6 (267 aa).

The N-linked (GlcNAc...) asparagine glycan is linked to N2. Transmembrane regions (helical) follow at residues 34 to 51 (FLFS…RHLM), 70 to 90 (LAVF…YILM), 111 to 131 (FWAY…IFII), 136 to 156 (KLIF…WYSY), 159 to 179 (MVAG…VMYS), 197 to 217 (FITL…YLVF), and 234 to 254 (IFWS…FFFE).

It belongs to the ELO family. ELOVL6 subfamily. Post-translationally, N-Glycosylated. In terms of tissue distribution, expressed in liver and barely in brain.

Its subcellular location is the endoplasmic reticulum membrane. The enzyme catalyses a very-long-chain acyl-CoA + malonyl-CoA + H(+) = a very-long-chain 3-oxoacyl-CoA + CO2 + CoA. It catalyses the reaction hexadecanoyl-CoA + malonyl-CoA + H(+) = 3-oxooctadecanoyl-CoA + CO2 + CoA. The catalysed reaction is (9Z)-hexadecenoyl-CoA + malonyl-CoA + H(+) = 3-oxo-(11Z)-octadecenoyl-CoA + CO2 + CoA. It carries out the reaction dodecanoyl-CoA + malonyl-CoA + H(+) = 3-oxotetradecanoyl-CoA + CO2 + CoA. The enzyme catalyses tetradecanoyl-CoA + malonyl-CoA + H(+) = 3-oxohexadecanoyl-CoA + CO2 + CoA. It catalyses the reaction (9Z)-octadecenoyl-CoA + malonyl-CoA + H(+) = 3-oxo-(11Z)-eicosenoyl-CoA + CO2 + CoA. The catalysed reaction is (9Z,12Z)-octadecadienoyl-CoA + malonyl-CoA + H(+) = (11Z,14Z)-3-oxoicosa-11,14-dienoyl-CoA + CO2 + CoA. It carries out the reaction (9Z,12Z,15Z)-octadecatrienoyl-CoA + malonyl-CoA + H(+) = (11Z,14Z,17Z)-3-oxoeicosatrienoyl-CoA + CO2 + CoA. It participates in lipid metabolism; fatty acid biosynthesis. With respect to regulation, the reaction is stimulated by the presence of HSD17B12, the enzyme catalyzing the second step of the elongation cycle. Its function is as follows. Catalyzes the first and rate-limiting reaction of the four reactions that constitute the long-chain fatty acids elongation cycle. This endoplasmic reticulum-bound enzymatic process allows the addition of 2 carbons to the chain of long- and very long-chain fatty acids (VLCFAs) per cycle. Condensing enzyme that elongates fatty acids with 12, 14 and 16 carbons with higher activity toward C16:0 acyl-CoAs. Catalyzes the synthesis of unsaturated C16 long chain fatty acids and, to a lesser extent, C18:0 and those with low desaturation degree. May participate in the production of saturated and monounsaturated VLCFAs of different chain lengths that are involved in multiple biological processes as precursors of membrane lipids and lipid mediators. This chain is Very long chain fatty acid elongase 6, found in Rattus norvegicus (Rat).